A 329-amino-acid chain; its full sequence is Mo25-like protein (329 aa).

This sequence belongs to the Mo25 family.

The chain is Mo25-like protein (pmo25) from Schizosaccharomyces pombe (strain 972 / ATCC 24843) (Fission yeast).